Here is a 304-residue protein sequence, read N- to C-terminus: Glycine--tRNA ligase alpha subunit (304 aa).

Belongs to the class-II aminoacyl-tRNA synthetase family. Tetramer of two alpha and two beta subunits.

It localises to the cytoplasm. The catalysed reaction is tRNA(Gly) + glycine + ATP = glycyl-tRNA(Gly) + AMP + diphosphate. This Tolumonas auensis (strain DSM 9187 / NBRC 110442 / TA 4) protein is Glycine--tRNA ligase alpha subunit.